Here is a 367-residue protein sequence, read N- to C-terminus: MSSAALEVRLNHRFPGTEIDVCFAGRGCTVLFGPSGAGKSTIAMAVAGLMRPDHLHLRVGGLDLHDLPPERRRIGVVFQDARLFPHLSVLGNLEYGARRAPPGDFPLSGDFPLSREEIMTMLGIGALLKRRPATLSGGERQRVAIGRALLSRPHMLVMDEPLASLDQARKQDILPVLRRLKAAGLPMLYVTHALQEMAYLADDVVLLETGRVRASGSLGHISSDPALSGGFGHEAGAVLEAVVSGHMPDRGLTILSCAGTEVLVPLQALKPGTGLRVRIPAADVIVATESPGHISLHNILPVVMTDWQPAHLQGKAGTTQEALVRLALPGGHLLARVTRDAIQRLGLEPGRHVLALIKSVAVDVLGP.

One can recognise an ABC transporter domain in the interval 1–234 (MSSAALEVRL…PALSGGFGHE (234 aa)). 33–40 (GPSGAGKS) is an ATP binding site. The Mop domain maps to 293 to 366 (HISLHNILPV…IKSVAVDVLG (74 aa)).

The protein belongs to the ABC transporter superfamily. Molybdate importer (TC 3.A.1.8) family. As to quaternary structure, the complex is composed of two ATP-binding proteins (ModC), two transmembrane proteins (ModB) and a solute-binding protein (ModA).

The protein resides in the cell inner membrane. The enzyme catalyses molybdate(out) + ATP + H2O = molybdate(in) + ADP + phosphate + H(+). Part of the ABC transporter complex ModABC involved in molybdenum import. Responsible for energy coupling to the transport system. The chain is Molybdenum import ATP-binding protein ModC from Granulibacter bethesdensis (strain ATCC BAA-1260 / CGDNIH1).